Consider the following 154-residue polypeptide: Endoribonuclease YbeY (154 aa).

Residues His114, His118, and His124 each contribute to the Zn(2+) site.

Belongs to the endoribonuclease YbeY family. Zn(2+) serves as cofactor.

It is found in the cytoplasm. Its function is as follows. Single strand-specific metallo-endoribonuclease involved in late-stage 70S ribosome quality control and in maturation of the 3' terminus of the 16S rRNA. This Aggregatibacter actinomycetemcomitans (Actinobacillus actinomycetemcomitans) protein is Endoribonuclease YbeY.